We begin with the raw amino-acid sequence, 618 residues long: UvrABC system protein C (618 aa).

In terms of domain architecture, GIY-YIG spans 20–98 (TAPGVYRMYA…IKSLSPRYNV (79 aa)). The 36-residue stretch at 207–242 (DQLGEEIMHSMQQASEALEFERAARLRDLLSSLRSM) folds into the UVR domain.

Belongs to the UvrC family. Interacts with UvrB in an incision complex.

The protein localises to the cytoplasm. The UvrABC repair system catalyzes the recognition and processing of DNA lesions. UvrC both incises the 5' and 3' sides of the lesion. The N-terminal half is responsible for the 3' incision and the C-terminal half is responsible for the 5' incision. The sequence is that of UvrABC system protein C from Xanthomonas campestris pv. campestris (strain B100).